A 450-amino-acid chain; its full sequence is MMCGLEIHVQLETESKLFCDCPTNYKEAPANSNICPVCLNQPGAKPYPTNEKAIENALMISLMLNCKIDKGFTYFMRKHYDYPDLPSGYQRTSVPIGYEGELNGVRIREIHMEEDPGQYKPDRGTVDFNRSGIPLIEIVTEPDIKSPEEARTFLKELIRVLQYSGGARGEGTMRADVNISIEGGNRVEMKNINSIKGAYKALKFELVRQKNLMKRGVEIKQETRAYLESQMITVGMRLKEDADDYRFIPDPDLPPMEISDAQIENVLEIMPEAPHNKVRRFTEEYGIDAESAKVLTSELDLAIAYEAVAKQVDPKFASMWMRDELKRVLSYNKLDFADSGILVEDIVELLEMLQNKEITTKAGQRIIEHMPNNKQTPKAIAEELGLLGVVKDDEVIAAVKQAIEENPKAVNDYLEGQKSSLNFLVGQVMRLTRGKADPGETVKILKENIE.

Belongs to the GatB/GatE family. GatB subfamily. In terms of assembly, heterotrimer of A, B and C subunits.

It catalyses the reaction L-glutamyl-tRNA(Gln) + L-glutamine + ATP + H2O = L-glutaminyl-tRNA(Gln) + L-glutamate + ADP + phosphate + H(+). The enzyme catalyses L-aspartyl-tRNA(Asn) + L-glutamine + ATP + H2O = L-asparaginyl-tRNA(Asn) + L-glutamate + ADP + phosphate + 2 H(+). Its function is as follows. Allows the formation of correctly charged Asn-tRNA(Asn) or Gln-tRNA(Gln) through the transamidation of misacylated Asp-tRNA(Asn) or Glu-tRNA(Gln) in organisms which lack either or both of asparaginyl-tRNA or glutaminyl-tRNA synthetases. The reaction takes place in the presence of glutamine and ATP through an activated phospho-Asp-tRNA(Asn) or phospho-Glu-tRNA(Gln). The chain is Aspartyl/glutamyl-tRNA(Asn/Gln) amidotransferase subunit B from Methanobrevibacter smithii (strain ATCC 35061 / DSM 861 / OCM 144 / PS).